Reading from the N-terminus, the 389-residue chain is Type II methyltransferase M1.ScrFI (389 aa).

An HTH cro/C1-type domain is found at 16–71 (IKEKRLRLNMTQKELADAVGMSKNGDRTIRRWENGETCPSQLEISAILRFPEIAPF). Residues 79–387 (YKMIDLFAGI…EKMLEVLEKS (309 aa)) form the SAM-dependent MTase C5-type domain. The active site involves Cys-149.

It belongs to the class I-like SAM-binding methyltransferase superfamily. C5-methyltransferase family.

The catalysed reaction is a 2'-deoxycytidine in DNA + S-adenosyl-L-methionine = a 5-methyl-2'-deoxycytidine in DNA + S-adenosyl-L-homocysteine + H(+). In terms of biological role, a methylase, recognizes the double-stranded sequence 5'-CCNGG-3', methylates C-2 on both strands, and protects the DNA from cleavage by the ScrFI endonuclease. The sequence is that of Type II methyltransferase M1.ScrFI (scrFIAM) from Lactococcus lactis subsp. cremoris (Streptococcus cremoris).